Here is a 206-residue protein sequence, read N- to C-terminus: Small ribosomal subunit protein uS4 (206 aa).

Residues 96–156 enclose the S4 RNA-binding domain; the sequence is GRLDNVVYRM…EKSKKQARIK (61 aa).

Belongs to the universal ribosomal protein uS4 family. Part of the 30S ribosomal subunit. Contacts protein S5. The interaction surface between S4 and S5 is involved in control of translational fidelity.

In terms of biological role, one of the primary rRNA binding proteins, it binds directly to 16S rRNA where it nucleates assembly of the body of the 30S subunit. With S5 and S12 plays an important role in translational accuracy. The polypeptide is Small ribosomal subunit protein uS4 (Pasteurella multocida (strain Pm70)).